We begin with the raw amino-acid sequence, 413 residues long: Histidine--tRNA ligase (413 aa).

This sequence belongs to the class-II aminoacyl-tRNA synthetase family. In terms of assembly, homodimer.

It localises to the cytoplasm. It carries out the reaction tRNA(His) + L-histidine + ATP = L-histidyl-tRNA(His) + AMP + diphosphate + H(+). This is Histidine--tRNA ligase from Fusobacterium nucleatum subsp. nucleatum (strain ATCC 25586 / DSM 15643 / BCRC 10681 / CIP 101130 / JCM 8532 / KCTC 2640 / LMG 13131 / VPI 4355).